The following is a 235-amino-acid chain: Biosynthetic peptidoglycan transglycosylase (235 aa).

The chain crosses the membrane as a helical span at residues 12 to 34; sequence GLGKLLLAALLSTIVSVALLRFI.

Belongs to the glycosyltransferase 51 family.

It is found in the cell inner membrane. The catalysed reaction is [GlcNAc-(1-&gt;4)-Mur2Ac(oyl-L-Ala-gamma-D-Glu-L-Lys-D-Ala-D-Ala)](n)-di-trans,octa-cis-undecaprenyl diphosphate + beta-D-GlcNAc-(1-&gt;4)-Mur2Ac(oyl-L-Ala-gamma-D-Glu-L-Lys-D-Ala-D-Ala)-di-trans,octa-cis-undecaprenyl diphosphate = [GlcNAc-(1-&gt;4)-Mur2Ac(oyl-L-Ala-gamma-D-Glu-L-Lys-D-Ala-D-Ala)](n+1)-di-trans,octa-cis-undecaprenyl diphosphate + di-trans,octa-cis-undecaprenyl diphosphate + H(+). It participates in cell wall biogenesis; peptidoglycan biosynthesis. Its function is as follows. Peptidoglycan polymerase that catalyzes glycan chain elongation from lipid-linked precursors. This chain is Biosynthetic peptidoglycan transglycosylase, found in Aeromonas hydrophila subsp. hydrophila (strain ATCC 7966 / DSM 30187 / BCRC 13018 / CCUG 14551 / JCM 1027 / KCTC 2358 / NCIMB 9240 / NCTC 8049).